A 137-amino-acid polypeptide reads, in one-letter code: Small heat shock protein IbpA (137 aa).

The sHSP domain occupies 28 to 137; it reads SQSNGGYPPY…AKKPRRIEIN (110 aa).

It belongs to the small heat shock protein (HSP20) family. As to quaternary structure, monomer. Forms homomultimers of about 100-150 subunits at optimal growth temperatures. Conformation changes to monomers at high temperatures or high ionic concentrations.

It is found in the cytoplasm. In terms of biological role, associates with aggregated proteins, together with IbpB, to stabilize and protect them from irreversible denaturation and extensive proteolysis during heat shock and oxidative stress. Aggregated proteins bound to the IbpAB complex are more efficiently refolded and reactivated by the ATP-dependent chaperone systems ClpB and DnaK/DnaJ/GrpE. Its activity is ATP-independent. In Shigella sonnei (strain Ss046), this protein is Small heat shock protein IbpA.